We begin with the raw amino-acid sequence, 1363 residues long: Clustered mitochondria protein homolog (1363 aa).

2 TPR repeats span residues 29–63 and 120–154; these read LPSF…IVLC and KEKS…DIGS. The segment at 172–191 is disordered; that stretch reads KEAKKEESTEKEQQEKEELS. The stretch at 283-316 is one TPR 3 repeat; the sequence is STINFNPTIKINEKGKFNKSYLLYDLVCQLSPLF. In terms of domain architecture, Clu spans 361-631; it reads DLSRSQLSSL…RTTPRDIEFI (271 aa). The segment at 521-544 is disordered; sequence PVITSPTTDAEGKNEAEEPESEPV. One copy of the TPR 4 repeat lies at 548–581; sequence VYGLSSDGSRILEDKSFEEPLKQIGDFFHLKPHK. Over residues 799-832 the composition is skewed to basic and acidic residues; the sequence is AKAEKKREEEKEKEEKEATESEDKKEKKEDKEDA. Positions 799-844 are disordered; that stretch reads AKAEKKREEEKEKEEKEATESEDKKEKKEDKEDAEKEEAEAEEEVP. Residues 833 to 842 are compositionally biased toward acidic residues; sequence EKEEAEAEEE. 4 TPR repeats span residues 1057–1090, 1141–1174, 1183–1216, and 1225–1258; these read VEEI…NESI, ITAY…WSLV, INTL…TKKL, and GFIY…FMKL. The segment at 1291 to 1363 is disordered; the sequence is QQETQKKSKT…SGSKKSNKKK (73 aa). Polar residues predominate over residues 1330-1342; it reads PPQSNPEIANQSI.

Belongs to the CLU family. May associate with the eukaryotic translation initiation factor 3 (eIF-3) complex.

The protein resides in the cytoplasm. Functionally, mRNA-binding protein involved in proper cytoplasmic distribution of mitochondria. The polypeptide is Clustered mitochondria protein homolog (Candida albicans (strain SC5314 / ATCC MYA-2876) (Yeast)).